The following is a 379-amino-acid chain: uncharacterized protein (379 aa).

This is an uncharacterized protein from Acanthamoeba polyphaga (Amoeba).